We begin with the raw amino-acid sequence, 515 residues long: Fibril protein (515 aa).

Methionine 1 bears the Blocked amino end (Met) mark. 4 helical regions span residues 21-34, 206-228, 357-376, and 426-440; these read VKKY…IQHV, HKFK…FNLL, KIET…AEKC, and SNEF…LKDV.

Its subcellular location is the cytoplasm. It localises to the cytoskeleton. In terms of biological role, acts as a cytoskeletal structure involved in the shape and motility of spiroplasmas. This is Fibril protein from Spiroplasma citri.